A 340-amino-acid polypeptide reads, in one-letter code: Mitochondrial carrier protein CoAc1 (340 aa).

A run of 6 helical transmembrane segments spans residues 22-42 (ALDL…AGAF), 85-105 (FYKG…LHYM), 130-147 (LLAG…TYPL), 199-219 (GVGP…YIYE), 237-257 (LSCG…LDVV), and 297-317 (FAGL…GFTT). Solcar repeat units lie at residues 27–113 (PVYA…YRCW), 124–224 (TGPV…LKSQ), and 231–324 (DSVI…MKAL).

This sequence belongs to the mitochondrial carrier (TC 2.A.29) family. As to expression, expressed throughout the plant.

It localises to the mitochondrion inner membrane. Functionally, required for the accumulation of coenzyme A in the mitochondrial matrix. This chain is Mitochondrial carrier protein CoAc1, found in Zea mays (Maize).